The primary structure comprises 139 residues: Natriuretic peptide Mc-NP (139 aa).

A signal peptide spans 1-25 (MVGLSRLRGGGLLLVLALLPLALDG). A propeptide spanning residues 26–75 (KPLEEAPTAPSRIIPFSRPVRKQSQAVLDPMVHPERPAGSGDDGDSRRLE) is cleaved from the precursor. Positions 45-72 (VRKQSQAVLDPMVHPERPAGSGDDGDSR) are disordered. An intrachain disulfide couples C86 to C102. Positions 117–139 (IIPFSRPVRKESRAALDRMQQPG) are excised as a propeptide.

This sequence belongs to the natriuretic peptide family. As to expression, expressed by the venom gland.

Its subcellular location is the secreted. Snake venom natriuretic peptide that dose-dependently induces the rapid relaxation of rat aortic strips phenylephrine-precontracted. Acts by stimulating cGMP production in a dose-dependent manner (by probably activating NPR1 and/or NPR2). May also show potent hypotensive effects. A synthetic peptide (AA 77-108, where the Cys-95 is replaced by a Ser) increases sodium excretion and urinary volume in rat kidneys. In Micrurus corallinus (Brazilian coral snake), this protein is Natriuretic peptide Mc-NP.